Reading from the N-terminus, the 336-residue chain is Homoserine dehydrogenase (336 aa).

Residue phenylalanine 8 participates in NADPH binding. Alanine 10, isoleucine 11, and threonine 94 together coordinate NAD(+). NADPH-binding residues include isoleucine 11, threonine 94, and lysine 123. NADP(+) contacts are provided by isoleucine 11, threonine 94, and lysine 123. Residues glutamate 147, valine 150, and glycine 152 each coordinate Na(+). The NADP(+) site is built by glycine 205 and glutamate 208. 2 residues coordinate L-homoserine: glutamate 208 and aspartate 219. Lysine 223 functions as the Proton donor in the catalytic mechanism. Glycine 315 serves as a coordination point for NADPH. Glycine 315 is an NAD(+) binding site. Glycine 315 provides a ligand contact to NADP(+).

Belongs to the homoserine dehydrogenase family. It depends on a metal cation as a cofactor.

The catalysed reaction is L-homoserine + NADP(+) = L-aspartate 4-semialdehyde + NADPH + H(+). It catalyses the reaction L-homoserine + NAD(+) = L-aspartate 4-semialdehyde + NADH + H(+). The protein operates within amino-acid biosynthesis; L-methionine biosynthesis via de novo pathway; L-homoserine from L-aspartate: step 3/3. It participates in amino-acid biosynthesis; L-threonine biosynthesis; L-threonine from L-aspartate: step 3/5. Its function is as follows. Catalyzes the conversion of L-aspartate-beta-semialdehyde (L-Asa) to L-homoserine (L-Hse), the third step in the biosynthesis of threonine and methionine from aspartate. The sequence is that of Homoserine dehydrogenase (hom) from Methanocaldococcus jannaschii (strain ATCC 43067 / DSM 2661 / JAL-1 / JCM 10045 / NBRC 100440) (Methanococcus jannaschii).